The sequence spans 65 residues: Metallothionein-like protein 3B (65 aa).

It belongs to the metallothionein superfamily. Type 15 family. Expressed in leaves and rachis.

Its function is as follows. Metallothioneins have a high content of cysteine residues that bind various heavy metals. The protein is Metallothionein-like protein 3B (MT3B) of Oryza sativa subsp. japonica (Rice).